The sequence spans 240 residues: tRNA pseudouridine synthase B (240 aa).

D48 (nucleophile) is an active-site residue.

This sequence belongs to the pseudouridine synthase TruB family. Type 1 subfamily.

The catalysed reaction is uridine(55) in tRNA = pseudouridine(55) in tRNA. Its function is as follows. Responsible for synthesis of pseudouridine from uracil-55 in the psi GC loop of transfer RNAs. The chain is tRNA pseudouridine synthase B from Bacteroides thetaiotaomicron (strain ATCC 29148 / DSM 2079 / JCM 5827 / CCUG 10774 / NCTC 10582 / VPI-5482 / E50).